The sequence spans 691 residues: MARSPVEPPASQPAKRAAWLRAELERANYAYYVLDQPDLPDAEYDRLFVELQRIEAEHPDLVTPDSPTQRVGGEAASGFTPVVHDKPMLSLNNGFADEDVIAFDKRVADGLDKATDLAGTVTEPVEYACELKFDGLAISLRYENGRFVQASTRGDGTTGEDVTENIRTIRAIPLTLKGKRIPRMLDVRGEVLMFKRDFARLNERQRAAGQREFANPRNAAAGSLRQLDSKITASRPLSFFAYGIGVLDGADMPDTHSGLLDWYETLGLPVNRERAVVRGAAGLLAFFHSVGERRESLPYDIDGVVYKVNRRDEQDRLGFVSRAPRFALAHKFPAQEALTKLIAIDVQVGRTGAITPVARLEPVFVGGATVTNATLHNEDEVRRKDIRIGDTVIVRRAGDVIPEVVSAVLDRRPADAQEFVMPTECPECGSRIERLPDEAIARCTGGLFCPAQRKQALWHFAQRRALDIDGLGEKIIDQLVEQNLVRTPADLFNLGFSTLVGLDRFAEKSARNLIDSLEKAKHTTLARFIYALGIRHVGESTAKDLAKHFGSLDPIMDAPIDALLEVNDVGPIVAESIHQFFAEEHNRTVIEQLRARGKVTWPEGPPAPRAPQGVLAGKTVVLTGTLPTLTREAAKEMLEAAGAKVAGSVSKKTDYVVAGADAGSKLAKAEELGIPVLDEAGMHTLLEGHAR.

NAD(+) contacts are provided by residues 41–45, 90–91, and Glu-130; these read DAEYD and SL. The active-site N6-AMP-lysine intermediate is the Lys-132. Residues Arg-153, Glu-190, Lys-307, and Lys-331 each contribute to the NAD(+) site. 4 residues coordinate Zn(2+): Cys-425, Cys-428, Cys-443, and Cys-449. Residues 610–691 enclose the BRCT domain; the sequence is APQGVLAGKT…MHTLLEGHAR (82 aa).

This sequence belongs to the NAD-dependent DNA ligase family. LigA subfamily. Requires Mg(2+) as cofactor. Mn(2+) serves as cofactor.

The catalysed reaction is NAD(+) + (deoxyribonucleotide)n-3'-hydroxyl + 5'-phospho-(deoxyribonucleotide)m = (deoxyribonucleotide)n+m + AMP + beta-nicotinamide D-nucleotide.. Its function is as follows. DNA ligase that catalyzes the formation of phosphodiester linkages between 5'-phosphoryl and 3'-hydroxyl groups in double-stranded DNA using NAD as a coenzyme and as the energy source for the reaction. It is essential for DNA replication and repair of damaged DNA. The protein is DNA ligase of Burkholderia pseudomallei (strain K96243).